The primary structure comprises 124 residues: Putative C(50) carotenoid beta-cyclase subunit A (124 aa).

3 helical membrane passes run 1-21 (MIGLSYLLVQVVSFAGILVID), 34-54 (AAALAVTASVALLLTWDVLGV), and 78-98 (FEEVVFLAFLSHLALVCAAGV).

The protein belongs to the lycopene beta-cyclase family. As to quaternary structure, may form a complex with LbtBC.

The protein resides in the cell membrane. The protein operates within carotenoid biosynthesis. Functionally, involved in the biosynthesis of C(50) beta-cyclic carotenoids. May have C(50) carotenoid beta-cyclase activity and produce the C(50) beta-cyclic carotenoid C.p.450 from the C(50) carotenoid dihydrobisanhydrobacterioruberin (DH-BABR). This is Putative C(50) carotenoid beta-cyclase subunit A from Dietzia sp. (strain CQ4).